The sequence spans 721 residues: bZIP transcription factor 17 (721 aa).

Disordered regions lie at residues 1-51 (MAEP…LMSD) and 87-232 (QEQF…EKKR). Residues 1–366 (MAEPITKEQP…KSEAKTKKVA (366 aa)) are Cytoplasmic-facing. Residues 9-25 (QPPPPAPDPNSTYPPPS) are compositionally biased toward pro residues. Positions 125–141 (ESPRDSDDRCSGADHNL) are enriched in basic and acidic residues. Residues 146–170 (PLSSQGSGNCGSDVSEATNESSPKS) are compositionally biased toward polar residues. A compositionally biased stretch (basic and acidic residues) spans 204–216 (DESRNSKYRRSGE). The bZIP domain maps to 228 to 288 (DEKKRARLMR…AENATLRQQL (61 aa)). Residues 230 to 261 (KKRARLMRNRESAQLSRQRKKHYVEELEEKVR) are basic motif. A leucine-zipper region spans residues 267–274 (ITDLNGKI). Residues 337-359 (PRLKPQNTLGTSKAKKSESKKSE) are disordered. A helical transmembrane segment spans residues 367–387 (SISFLGLLFCLFLFGALAPIV). Residues 388-721 (NVNYGGISGA…RSGAPHLVTT (334 aa)) are Lumenal-facing. A compositionally biased stretch (polar residues) spans 422–436 (TSRSGAGTGVSNSNG). The segment at 422 to 462 (TSRSGAGTGVSNSNGMHRGRDSDRGARKNISATESSVTPGN) is disordered. N-linked (GlcNAc...) asparagine glycosylation is found at Asn450, Asn462, Asn609, and Asn617. The span at 451-462 (ISATESSVTPGN) shows a compositional bias: polar residues. Positions 627 to 630 (RRIL) match the RRIL cleavage motif motif. N-linked (GlcNAc...) asparagine glycosylation is found at Asn643 and Asn651.

This sequence belongs to the bZIP family. As to quaternary structure, interacts with BZIP28.

The protein localises to the endoplasmic reticulum membrane. It is found in the golgi apparatus membrane. It localises to the nucleus. Functionally, transcriptional activator involved in salt and osmotic stress responses. Functions as a stress sensor and transducer in a signaling pathway that resembles an ER stress response. Following salt stress, BZIP17 is cleaved by SBT6.1 (S1P) and S2P at the C-terminus and the N-terminal bZIP component is translocated to the nucleus, where it activates the expression of salt stress response genes. Functions as a stress sensor and transducer in ER stress signaling pathway. ER stress induces proteolysis of BZIP17 by SBT6.1 (S1P) and S2P, and the N-terminal bZIP component is translocated to the nucleus, where it activates the expression and production of ER chaperones, as well as protein involved in brassinosteroid (BR) signaling, which is required for stress acclimation and growth. The protein is bZIP transcription factor 17 of Arabidopsis thaliana (Mouse-ear cress).